The sequence spans 500 residues: Protein C13 (500 aa).

One can recognise a BTB domain in the interval 27–89; the sequence is EEIVFIMTVG…IETGIVTIDL (63 aa). Kelch repeat units lie at residues 301–348, 349–395, 397–440, and 441–490; these read ILYL…IFKN, RIYV…GTDN, LYVV…YHHG, and YIYM…IIED.

This sequence belongs to the poxviruses Kelch family.

The protein is Protein C13 of Swinepox virus (strain Kasza) (SWPV).